The chain runs to 94 residues: MAKYSIIMEKKNKLFDRTEYIIQVEHPKEKTPTREEAKEKIAEMLNVDKNKLVIKKIVSKYGLPYSFIYARVYDNIDTAKRVELKQILRRNNLQ.

This sequence belongs to the eukaryotic ribosomal protein eS24 family.

The protein is Small ribosomal subunit protein eS24 of Nanoarchaeum equitans (strain Kin4-M).